The primary structure comprises 161 residues: MRCPSCNSLDTQVKDSRPTEDSSVIRRRRVCVTCNFRFTTFERVQLRELTVIKRNGRRVPFDRDKLMRSVQISLRKRSVDPERVEKMVSAIVRELESGGESEVSSEAIGEIVMEHLRDLDDVAYVRFASVYRNFREAKDFEAVLGELSAEDETPRLAPVRK.

Residues Met-1–Thr-11 are compositionally biased toward polar residues. The segment at Met-1–Glu-20 is disordered. Residues Cys-3–Cys-34 fold into a zinc finger. Residues Leu-49–Asp-139 enclose the ATP-cone domain.

This sequence belongs to the NrdR family. Zn(2+) is required as a cofactor.

Negatively regulates transcription of bacterial ribonucleotide reductase nrd genes and operons by binding to NrdR-boxes. The polypeptide is Transcriptional repressor NrdR (Bradyrhizobium sp. (strain ORS 278)).